A 73-amino-acid polypeptide reads, in one-letter code: Translation initiation factor IF-1 (73 aa).

The 73-residue stretch at 1 to 73 (MAKKDGAIEV…SRGRIVYRYK (73 aa)) folds into the S1-like domain.

Belongs to the IF-1 family. In terms of assembly, component of the 30S ribosomal translation pre-initiation complex which assembles on the 30S ribosome in the order IF-2 and IF-3, IF-1 and N-formylmethionyl-tRNA(fMet); mRNA recruitment can occur at any time during PIC assembly.

The protein resides in the cytoplasm. In terms of biological role, one of the essential components for the initiation of protein synthesis. Stabilizes the binding of IF-2 and IF-3 on the 30S subunit to which N-formylmethionyl-tRNA(fMet) subsequently binds. Helps modulate mRNA selection, yielding the 30S pre-initiation complex (PIC). Upon addition of the 50S ribosomal subunit IF-1, IF-2 and IF-3 are released leaving the mature 70S translation initiation complex. The polypeptide is Translation initiation factor IF-1 (Mycolicibacterium smegmatis (strain ATCC 700084 / mc(2)155) (Mycobacterium smegmatis)).